The sequence spans 266 residues: Ribosomal RNA small subunit methyltransferase A (266 aa).

Residues asparagine 12, leucine 14, glycine 39, glutamate 61, aspartate 87, and asparagine 107 each coordinate S-adenosyl-L-methionine.

Belongs to the class I-like SAM-binding methyltransferase superfamily. rRNA adenine N(6)-methyltransferase family. RsmA subfamily.

Its subcellular location is the cytoplasm. The enzyme catalyses adenosine(1518)/adenosine(1519) in 16S rRNA + 4 S-adenosyl-L-methionine = N(6)-dimethyladenosine(1518)/N(6)-dimethyladenosine(1519) in 16S rRNA + 4 S-adenosyl-L-homocysteine + 4 H(+). Its function is as follows. Specifically dimethylates two adjacent adenosines (A1518 and A1519) in the loop of a conserved hairpin near the 3'-end of 16S rRNA in the 30S particle. May play a critical role in biogenesis of 30S subunits. This chain is Ribosomal RNA small subunit methyltransferase A, found in Nitratidesulfovibrio vulgaris (strain DP4) (Desulfovibrio vulgaris).